The sequence spans 954 residues: Lysine-specific demethylase JMJ14 (954 aa).

The segment at 1-46 (MDQLASLAESVAMEEDSEKQSIKGESSLEPDSTPSSPKITARWNPS) is disordered. The span at 29–38 (EPDSTPSSPK) shows a compositional bias: polar residues. The region spanning 56-97 (APIFYPTNEDFDDPLGYIEKLRSKAESYGICRIVPPVAWRPP) is the JmjN domain. Positions 136 to 143 (RKRRRISK) match the Nuclear localization signal 1 motif. Residues 148 to 170 (RRKRDSGCDTASSGSSDSEGKFG) are disordered. In terms of domain architecture, JmjC spans 263–429 (QYSQCGWNLN…HGQNAVEGYS (167 aa)). 3 residues coordinate Fe cation: H309, E311, and H397. Residues 470-477 (WKRVCSED) carry the Nuclear localization signal 2 motif. Positions 519, 522, 533, 535, 542, 545, 550, and 552 each coordinate Zn(2+). The segment at 519-571 (CFLCFYDLHMSASSCKCSPNRFACLIHAKDLCSCESKDRYILIRHTLDELWAL) adopts a C5HC2 zinc-finger fold. The disordered stretch occupies residues 641–670 (SNKEVQLKQDGDSDVNRHGHESERNHVHGI). Positions 645 to 670 (VQLKQDGDSDVNRHGHESERNHVHGI) are enriched in basic and acidic residues. In terms of domain architecture, FYR N-terminal spans 726-784 (ATNRLSLSVELLSSGSLVVKKLWCSKQAIYPKGFKSRVKFLSVLDPTNLTNYISEVLDA). An FYR C-terminal domain is found at 786–876 (LLGPLFRVSV…HQLEEYWNQK (91 aa)). The disordered stretch occupies residues 884–905 (EPIKEGEKDDTEKGGASDPSLD). Residues 885-905 (PIKEGEKDDTEKGGASDPSLD) show a composition bias toward basic and acidic residues.

The protein belongs to the JARID1 histone demethylase family. As to quaternary structure, interacts with NAC050 and NAC051/NAC052. Interacts with THAL in the nucleus. The cofactor is Fe(2+). Expressed in shoot apex, primary root tip, trichomes of young leaves, leaf vascular tissues, anther filaments and styles. Detected in inflorescences, leaves, stems, roots and siliques. Mostly expressed in floral organs, and, at low levels, in other organs.

Its subcellular location is the nucleus. It localises to the nucleoplasm. It carries out the reaction N(6),N(6),N(6)-trimethyl-L-lysyl(4)-[histone H3] + 2-oxoglutarate + O2 = N(6),N(6)-dimethyl-L-lysyl(4)-[histone H3] + formaldehyde + succinate + CO2. The catalysed reaction is N(6),N(6)-dimethyl-L-lysyl(4)-[histone H3] + 2-oxoglutarate + O2 = N(6)-methyl-L-lysyl(4)-[histone H3] + formaldehyde + succinate + CO2. The enzyme catalyses N(6)-methyl-L-lysyl(4)-[histone H3] + 2-oxoglutarate + O2 = L-lysyl(4)-[histone H3] + formaldehyde + succinate + CO2. It catalyses the reaction N(6),N(6),N(6)-trimethyl-L-lysyl(4)-[histone H3] + 3 2-oxoglutarate + 3 O2 = L-lysyl(4)-[histone H3] + 3 formaldehyde + 3 succinate + 3 CO2. Its function is as follows. Transcriptional repressor. Histone demethylase that demethylates 'Lys-4' (H3K4me) of histone H3 with a higher activity for H3K4me3 and H3K4me2 than H3K4me1. No activity on H3K9me3/2, H3K36me3/2 and H3K27me3/2. Function as a nocturne 'eraser' to counteract the diurnal 'writer' methylase activity of ATXR3/SDG2 thus orchestrating the circadian rhythm of histone modifications (e.g. H3K4me3) and modulating the rhythmic expression of diurnal target genes; this mechanism also relies on the circadian clock oscillators CCA1 and LHY. Involved in a negative regulation of root meristem growth upon suboptimal root growth conditions. Represses FT and TSF expression to inhibit the floral transition. Binds around the transcription start site of the FT locus. Involved in the DRM2-mediated maintenance of DNA methylation, but not required for the de novo DNA methylation. Required for demethylating histone H3K4me3 at the target of RNA silencing. Counteracts the DNA methylation of expressed transgenes; specific attenuation of transgene DNA methylation enhances the production of aberrant RNAs (e.g. uncapped and antisense) that readily induce systemic RDR6-dependent post-transcriptional transgene silencing (PTGS) spreading. Together with NAC051/NAC052 and NAC050, regulates gene expression and flowering time, probably by the promotion of RNA-mediated gene silencing. Together with JMJ16 and JMJ17, required for plant growth and development. Promotes local and systemic immunity (especially toward the bacterial pathogen Pseudomonas syringae Pst DC3000 avrRpt2) by regulating positively pathogen-induced H3K4me3 enrichment and expression of defense genes involved in salicylic acid (SA)- and pipecolic acid (Pip)-mediated defense pathways (e.g. PR1, FMO1, ALD1 and SARD4). In Arabidopsis thaliana (Mouse-ear cress), this protein is Lysine-specific demethylase JMJ14.